A 353-amino-acid polypeptide reads, in one-letter code: Alcohol dehydrogenase 1 (353 aa).

The Zn(2+) site is built by cysteine 47, histidine 70, cysteine 101, cysteine 104, cysteine 107, cysteine 115, and cysteine 157. NAD(+)-binding positions include 181 to 187, aspartate 205, lysine 210, 274 to 276, and arginine 346; these read GAGGGLG and IGL.

This sequence belongs to the zinc-containing alcohol dehydrogenase family. Homotetramer. The cofactor is Zn(2+).

It is found in the cytoplasm. It catalyses the reaction a primary alcohol + NAD(+) = an aldehyde + NADH + H(+). The enzyme catalyses a secondary alcohol + NAD(+) = a ketone + NADH + H(+). The chain is Alcohol dehydrogenase 1 (adh-1) from Neurospora crassa (strain ATCC 24698 / 74-OR23-1A / CBS 708.71 / DSM 1257 / FGSC 987).